We begin with the raw amino-acid sequence, 560 residues long: DNA ligase B (560 aa).

K124 (N6-AMP-lysine intermediate) is an active-site residue.

Belongs to the NAD-dependent DNA ligase family. LigB subfamily.

The enzyme catalyses NAD(+) + (deoxyribonucleotide)n-3'-hydroxyl + 5'-phospho-(deoxyribonucleotide)m = (deoxyribonucleotide)n+m + AMP + beta-nicotinamide D-nucleotide.. In terms of biological role, catalyzes the formation of phosphodiester linkages between 5'-phosphoryl and 3'-hydroxyl groups in double-stranded DNA using NAD as a coenzyme and as the energy source for the reaction. The polypeptide is DNA ligase B (Escherichia coli O157:H7).